The sequence spans 216 residues: Uracil phosphoribosyltransferase (216 aa).

Residues Arg85, Arg110, and 135 to 143 (DPMVATGYS) each bind 5-phospho-alpha-D-ribose 1-diphosphate. Uracil contacts are provided by residues Ile200 and 205–207 (GDA). Asp206 provides a ligand contact to 5-phospho-alpha-D-ribose 1-diphosphate.

The protein belongs to the UPRTase family. Mg(2+) serves as cofactor.

The catalysed reaction is UMP + diphosphate = 5-phospho-alpha-D-ribose 1-diphosphate + uracil. Its pathway is pyrimidine metabolism; UMP biosynthesis via salvage pathway; UMP from uracil: step 1/1. With respect to regulation, allosterically activated by GTP. Its function is as follows. Catalyzes the conversion of uracil and 5-phospho-alpha-D-ribose 1-diphosphate (PRPP) to UMP and diphosphate. This is Uracil phosphoribosyltransferase from Paraburkholderia phytofirmans (strain DSM 17436 / LMG 22146 / PsJN) (Burkholderia phytofirmans).